A 141-amino-acid polypeptide reads, in one-letter code: UPF0102 protein BRADO0179 (141 aa).

The disordered stretch occupies residues 1–24 (MAETDRATDKPAGAPKPAKTASPE). Low complexity predominate over residues 10–19 (KPAGAPKPAK).

The protein belongs to the UPF0102 family.

This Bradyrhizobium sp. (strain ORS 278) protein is UPF0102 protein BRADO0179.